A 744-amino-acid polypeptide reads, in one-letter code: Zinc finger protein 366 (744 aa).

The interval 206-228 (KQPPEPLLPRKAEPQESEETKQK) is disordered. A compositionally biased stretch (basic and acidic residues) spans 213–228 (LPRKAEPQESEETKQK). 11 C2H2-type zinc fingers span residues 253-275 (WQCP…ILGH), 281-303 (HACT…MLTH), 309-331 (HKCQ…MMQH), 337-359 (HNCR…EAKH), 365-387 (NICV…LTTH), 393-415 (YNCS…MMKH), 421-443 (YICS…SLTH), 449-471 (HKCG…VLIH), 477-499 (YQCH…MIVH), 505-527 (FKCK…MHLH), and 533-556 (FKCL…KVKH). The tract at residues 455–744 (GREFTLLANM…MEKQAVLLGI (290 aa)) is interaction with NRIP1. Positions 590 to 594 (PFDLS) match the PXDLS motif. Disordered regions lie at residues 603 to 627 (VFQS…NCYE) and 664 to 692 (KEEK…QERD).

In terms of assembly, interacts with ESR1 and NRIP1. Interacts (via PXDLS motif) with CTBP1. As to expression, expressed in immature and mature dendritic cells (DCs). Not detected in other blood cell types.

It is found in the nucleus. Functionally, has transcriptional repression activity. Acts as a corepressor of ESR1; the function seems to involve CTBP1 and histone deacetylases. This is Zinc finger protein 366 from Homo sapiens (Human).